A 368-amino-acid chain; its full sequence is Decarboxylase yanB (368 aa).

Residues His7, His9, and His159 each coordinate Zn(2+). Residue Asn169 is glycosylated (N-linked (GlcNAc...) asparagine). Zn(2+) is bound at residue Asp283. A helical membrane pass occupies residues 339-359 (WGAFSACLLLPVGLSALYSVL).

It belongs to the metallo-dependent hydrolases superfamily. ACMSD family.

Its subcellular location is the membrane. The enzyme catalyses 6-methylsalicylate + H(+) = 3-methylphenol + CO2. It functions in the pathway secondary metabolite biosynthesis; terpenoid biosynthesis. Functionally, decarboxylase; part of the gene cluster that mediates the biosynthesis of yanuthone D, a fungal isoprenoid epoxycyclohexenone that acts as an antibiotic against fungi and bacteria. The first step of the pathway is the synthesis of 6-methylsalicylic acid (6-MSA) by the polyketide synthase yanA. 6-MSA is then converted to m-cresol by the decarboxylase yanB. The cytochrome P450 monooxygenase yanC then catalyzes the oxidation of m-cresol to toluquinol. Epoxidation of toluquinol is then performed by the short chain dehydrogenase yanD, with the help of yanE, and a further prenylation by yanG leads to 7-deacetoxyyanuthone A. The next step is the hydroxylation of C-22 of 7-deacetoxyyanuthone A by the cytochrome P450 monooxygenase yanH to yield 22-deacetylyanuthone A. O-Mevalon transferase yanI then attaches mevalon to the hydroxyl group of 22-deacetylyanuthone A to produce yanuthone E. Finally, the FAD-dependent monooxygenase yanF oxidizes the hydroxyl group at C15 of yanuthone E to form yanuthone D. Furthermore, several branching points in the pathway lead to the production of yanuthones F and G from 7-deacetoxyyanuthone A; yanuthones H and I from 22-deacetylyanuthone A; and yanuthone J from yanuthone E. This chain is Decarboxylase yanB, found in Aspergillus niger (strain ATCC 1015 / CBS 113.46 / FGSC A1144 / LSHB Ac4 / NCTC 3858a / NRRL 328 / USDA 3528.7).